A 208-amino-acid polypeptide reads, in one-letter code: Bacitracin transport permease protein BCRB (208 aa).

Helical transmembrane passes span Leu23–Asn43, Val70–Phe90, Phe111–Leu131, Tyr135–Thr155, Ala159–Pro179, and Tyr182–Phe202.

It localises to the cell membrane. In terms of biological role, part of the binding-protein-dependent transport system for bacitracin that confer resistance to this antibiotic; probably responsible for the translocation of the substrate across the membrane. The polypeptide is Bacitracin transport permease protein BCRB (bcrB) (Bacillus licheniformis).